The following is a 473-amino-acid chain: Adenosylhomocysteinase (473 aa).

Substrate-binding residues include T64, D139, and E199. 200–202 lines the NAD(+) pocket; sequence TTT. Positions 229 and 233 each coordinate substrate. NAD(+) is bound by residues N234, 263–268, E286, N321, 342–344, and N387; these read GYGDVG and IGH.

Belongs to the adenosylhomocysteinase family. The cofactor is NAD(+).

It is found in the cytoplasm. It carries out the reaction S-adenosyl-L-homocysteine + H2O = L-homocysteine + adenosine. It functions in the pathway amino-acid biosynthesis; L-homocysteine biosynthesis; L-homocysteine from S-adenosyl-L-homocysteine: step 1/1. In terms of biological role, may play a key role in the regulation of the intracellular concentration of adenosylhomocysteine. In Paraburkholderia phytofirmans (strain DSM 17436 / LMG 22146 / PsJN) (Burkholderia phytofirmans), this protein is Adenosylhomocysteinase.